A 480-amino-acid polypeptide reads, in one-letter code: Bifunctional protein HldE (480 aa).

The interval 1–316 is ribokinase; sequence MNMHDFSKTK…EQLNASMRHQ (316 aa). Residue 192-195 coordinates ATP; the sequence is NQGE. Asp261 is an active-site residue. Positions 342–480 are cytidylyltransferase; that stretch reads FTNGCFDLLH…EAEIKEGAAQ (139 aa).

In the N-terminal section; belongs to the carbohydrate kinase PfkB family. This sequence in the C-terminal section; belongs to the cytidylyltransferase family. As to quaternary structure, homodimer.

It catalyses the reaction D-glycero-beta-D-manno-heptose 7-phosphate + ATP = D-glycero-beta-D-manno-heptose 1,7-bisphosphate + ADP + H(+). The enzyme catalyses D-glycero-beta-D-manno-heptose 1-phosphate + ATP + H(+) = ADP-D-glycero-beta-D-manno-heptose + diphosphate. It functions in the pathway nucleotide-sugar biosynthesis; ADP-L-glycero-beta-D-manno-heptose biosynthesis; ADP-L-glycero-beta-D-manno-heptose from D-glycero-beta-D-manno-heptose 7-phosphate: step 1/4. The protein operates within nucleotide-sugar biosynthesis; ADP-L-glycero-beta-D-manno-heptose biosynthesis; ADP-L-glycero-beta-D-manno-heptose from D-glycero-beta-D-manno-heptose 7-phosphate: step 3/4. In terms of biological role, catalyzes the phosphorylation of D-glycero-D-manno-heptose 7-phosphate at the C-1 position to selectively form D-glycero-beta-D-manno-heptose-1,7-bisphosphate. Catalyzes the ADP transfer from ATP to D-glycero-beta-D-manno-heptose 1-phosphate, yielding ADP-D-glycero-beta-D-manno-heptose. This chain is Bifunctional protein HldE, found in Hydrogenovibrio crunogenus (strain DSM 25203 / XCL-2) (Thiomicrospira crunogena).